A 321-amino-acid polypeptide reads, in one-letter code: Aspartate carbamoyltransferase catalytic subunit (321 aa).

The carbamoyl phosphate site is built by arginine 65 and threonine 66. Lysine 93 contacts L-aspartate. Positions 115, 143, and 146 each coordinate carbamoyl phosphate. Residues arginine 176 and arginine 230 each contribute to the L-aspartate site. Residues glycine 271 and proline 272 each coordinate carbamoyl phosphate.

It belongs to the aspartate/ornithine carbamoyltransferase superfamily. ATCase family. Heterododecamer (2C3:3R2) of six catalytic PyrB chains organized as two trimers (C3), and six regulatory PyrI chains organized as three dimers (R2).

The catalysed reaction is carbamoyl phosphate + L-aspartate = N-carbamoyl-L-aspartate + phosphate + H(+). It participates in pyrimidine metabolism; UMP biosynthesis via de novo pathway; (S)-dihydroorotate from bicarbonate: step 2/3. Catalyzes the condensation of carbamoyl phosphate and aspartate to form carbamoyl aspartate and inorganic phosphate, the committed step in the de novo pyrimidine nucleotide biosynthesis pathway. In Bartonella quintana (strain Toulouse) (Rochalimaea quintana), this protein is Aspartate carbamoyltransferase catalytic subunit.